Here is a 701-residue protein sequence, read N- to C-terminus: Pseudouridylate synthase PUS7L (701 aa).

Position 79 is a phosphoserine (Ser-79). Asp-339 acts as the Nucleophile in catalysis. Residues 424–647 form the TRUD domain; the sequence is GFVNYYGPQR…PGCYRQILKH (224 aa).

The protein belongs to the pseudouridine synthase TruD family.

The catalysed reaction is a uridine in mRNA = a pseudouridine in mRNA. In terms of biological role, pseudouridine synthase that catalyzes pseudouridylation of mRNAs. In Homo sapiens (Human), this protein is Pseudouridylate synthase PUS7L.